The primary structure comprises 452 residues: Bifunctional protein GlmU (452 aa).

The tract at residues 1 to 226 (MSLAVVILAA…GWEVDGVNDR (226 aa)) is pyrophosphorylase. Residues 8 to 11 (LAAG), Lys22, Gln73, 78 to 79 (GT), 99 to 101 (YGD), Gly136, Glu151, Asn166, and Asn224 each bind UDP-N-acetyl-alpha-D-glucosamine. Residue Asp101 coordinates Mg(2+). Asn224 serves as a coordination point for Mg(2+). Positions 227 to 247 (VQLARLERIYQQAQAETLMRD) are linker. The N-acetyltransferase stretch occupies residues 248–452 (GVTLLDPSRL…VANWQRPKKG (205 aa)). 2 residues coordinate UDP-N-acetyl-alpha-D-glucosamine: Arg330 and Lys348. His360 acts as the Proton acceptor in catalysis. Tyr363 and Asn374 together coordinate UDP-N-acetyl-alpha-D-glucosamine. Residues Ala377, 383–384 (NY), Ser402, Ala420, and Arg437 contribute to the acetyl-CoA site.

The protein in the N-terminal section; belongs to the N-acetylglucosamine-1-phosphate uridyltransferase family. This sequence in the C-terminal section; belongs to the transferase hexapeptide repeat family. As to quaternary structure, homotrimer. Mg(2+) is required as a cofactor.

It is found in the cytoplasm. It catalyses the reaction alpha-D-glucosamine 1-phosphate + acetyl-CoA = N-acetyl-alpha-D-glucosamine 1-phosphate + CoA + H(+). The enzyme catalyses N-acetyl-alpha-D-glucosamine 1-phosphate + UTP + H(+) = UDP-N-acetyl-alpha-D-glucosamine + diphosphate. The protein operates within nucleotide-sugar biosynthesis; UDP-N-acetyl-alpha-D-glucosamine biosynthesis; N-acetyl-alpha-D-glucosamine 1-phosphate from alpha-D-glucosamine 6-phosphate (route II): step 2/2. Its pathway is nucleotide-sugar biosynthesis; UDP-N-acetyl-alpha-D-glucosamine biosynthesis; UDP-N-acetyl-alpha-D-glucosamine from N-acetyl-alpha-D-glucosamine 1-phosphate: step 1/1. It participates in bacterial outer membrane biogenesis; LPS lipid A biosynthesis. Functionally, catalyzes the last two sequential reactions in the de novo biosynthetic pathway for UDP-N-acetylglucosamine (UDP-GlcNAc). The C-terminal domain catalyzes the transfer of acetyl group from acetyl coenzyme A to glucosamine-1-phosphate (GlcN-1-P) to produce N-acetylglucosamine-1-phosphate (GlcNAc-1-P), which is converted into UDP-GlcNAc by the transfer of uridine 5-monophosphate (from uridine 5-triphosphate), a reaction catalyzed by the N-terminal domain. The chain is Bifunctional protein GlmU from Alcanivorax borkumensis (strain ATCC 700651 / DSM 11573 / NCIMB 13689 / SK2).